The chain runs to 244 residues: Probable proteasome subunit alpha type-1 (244 aa).

This sequence belongs to the peptidase T1A family. In terms of assembly, the 26S proteasome consists of a 20S proteasome core and two 19S regulatory subunits. The 20S proteasome core is composed of 28 subunits that are arranged in four stacked rings, resulting in a barrel-shaped structure. The two end rings are each formed by seven alpha subunits, and the two central rings are each formed by seven beta subunits. The catalytic chamber with the active sites is on the inside of the barrel.

Its subcellular location is the cytoplasm. It is found in the nucleus. In terms of biological role, the proteasome is a multicatalytic proteinase complex which is characterized by its ability to cleave peptides with Arg, Phe, Tyr, Leu, and Glu adjacent to the leaving group at neutral or slightly basic pH. The proteasome has an ATP-dependent proteolytic activity. This is Probable proteasome subunit alpha type-1 from Schizosaccharomyces pombe (strain 972 / ATCC 24843) (Fission yeast).